Here is a 302-residue protein sequence, read N- to C-terminus: Acetylglutamate kinase (302 aa).

Residues 67 to 68, Arg89, and Asn189 each bind substrate; that span reads GG.

This sequence belongs to the acetylglutamate kinase family. ArgB subfamily.

Its subcellular location is the cytoplasm. The catalysed reaction is N-acetyl-L-glutamate + ATP = N-acetyl-L-glutamyl 5-phosphate + ADP. Its pathway is amino-acid biosynthesis; L-arginine biosynthesis; N(2)-acetyl-L-ornithine from L-glutamate: step 2/4. Catalyzes the ATP-dependent phosphorylation of N-acetyl-L-glutamate. This Streptomyces clavuligerus protein is Acetylglutamate kinase.